Here is a 225-residue protein sequence, read N- to C-terminus: Small ribosomal subunit protein uS3 (225 aa).

The KH type-2 domain maps to 18 to 87; sequence VDEYLAKQFY…NPQITVTSVE (70 aa).

The protein belongs to the universal ribosomal protein uS3 family. As to quaternary structure, part of the 30S ribosomal subunit.

Binds the lower part of the 30S subunit head. This Sulfurisphaera tokodaii (strain DSM 16993 / JCM 10545 / NBRC 100140 / 7) (Sulfolobus tokodaii) protein is Small ribosomal subunit protein uS3.